We begin with the raw amino-acid sequence, 101 residues long: Small ribosomal subunit protein uS10 (101 aa).

It belongs to the universal ribosomal protein uS10 family. Part of the 30S ribosomal subunit.

Functionally, involved in the binding of tRNA to the ribosomes. This chain is Small ribosomal subunit protein uS10, found in Mycobacteroides abscessus (strain ATCC 19977 / DSM 44196 / CCUG 20993 / CIP 104536 / JCM 13569 / NCTC 13031 / TMC 1543 / L948) (Mycobacterium abscessus).